Here is a 493-residue protein sequence, read N- to C-terminus: Transcription termination factor MTERF5, chloroplastic (493 aa).

Residues 1–43 (MQSLSQLGPSEIFLVARREKPSTRAQLWFTGRLSFRQETNGIR) constitute a chloroplast transit peptide.

This sequence belongs to the mTERF family. As to quaternary structure, interacts with pTAC6. As to expression, expressed in roots, rosette leaves, cauline leaves, stems, flower buds and open flowers.

The protein resides in the plastid. The protein localises to the chloroplast. Functionally, transcription termination factor required for processing and steady-state levels of plastid transcripts. Involved also in chloroplast transcriptional pausing, a general feature of chloroplast genes. Specifically and positively regulates the transcription of chloroplast psbEFLJ encoding for photosystem II (PSII) core subunits psbE, psbF, psbL and psbJ; causes the plastid-encoded RNA polymerase (PEP) complex to pause at psbEFLJ by binding to the +30 to +51 region of double-stranded DNA, and recruits additional pTAC6 to the transcriptionally paused region of psbEFLJ. May play a role in response to abiotic stresses. This is Transcription termination factor MTERF5, chloroplastic from Arabidopsis thaliana (Mouse-ear cress).